The following is a 278-amino-acid chain: Elongation factor Ts (278 aa).

The tract at residues 80 to 83 (TDFV) is involved in Mg(2+) ion dislocation from EF-Tu.

It belongs to the EF-Ts family.

It localises to the cytoplasm. Its function is as follows. Associates with the EF-Tu.GDP complex and induces the exchange of GDP to GTP. It remains bound to the aminoacyl-tRNA.EF-Tu.GTP complex up to the GTP hydrolysis stage on the ribosome. The sequence is that of Elongation factor Ts from Micrococcus luteus (strain ATCC 4698 / DSM 20030 / JCM 1464 / CCM 169 / CCUG 5858 / IAM 1056 / NBRC 3333 / NCIMB 9278 / NCTC 2665 / VKM Ac-2230) (Micrococcus lysodeikticus).